The following is a 373-amino-acid chain: P2Y purinoceptor 1 (373 aa).

Residues 1 to 51 are Extracellular-facing; it reads MTEVLWPAVPNGTDAAFLAGPGSSWGNSTVASTAAVSSSFKCALTKTGFQF. Asn11 and Asn27 each carry an N-linked (GlcNAc...) asparagine glycan. Cystine bridges form between Cys42/Cys296 and Cys124/Cys202. Lys46 lines the ADP pocket. The helical transmembrane segment at 52 to 74 threads the bilayer; that stretch reads YYLPAVYILVFIIGFLGNSVAIW. The Cytoplasmic segment spans residues 75–87; sequence MFVFHMKPWSGIS. The chain crosses the membrane as a helical span at residues 88–109; sequence VYMFNLALADFLYVLTLPALIF. Topologically, residues 110-125 are extracellular; it reads YYFNKTDWIFGDAMCK. A glycan (N-linked (GlcNAc...) asparagine) is linked at Asn113. Residues 126 to 147 form a helical membrane-spanning segment; sequence LQRFIFHVNLYGSILFLTCISA. The Cytoplasmic portion of the chain corresponds to 148–166; sequence HRYSGVVYPLKSLGRLKKK. A helical transmembrane segment spans residues 167-188; that stretch reads NAICISVLVWLIVVVAISPILF. The Extracellular portion of the chain corresponds to 189-214; sequence YSGTGVRKNKTITCYDTTSDEYLRSY. Asn197 carries N-linked (GlcNAc...) asparagine glycosylation. 203–205 contributes to the ADP binding site; that stretch reads YDT. The helical transmembrane segment at 215–237 threads the bilayer; the sequence is FIYSMCTTVAMFCVPLVLILGCY. Residues 238-260 are Cytoplasmic-facing; sequence GLIVRALIYKDLDNSPLRRKSIY. The helical transmembrane segment at 261–284 threads the bilayer; the sequence is LVIIVLTVFAVSYIPFHVMKTMNL. ADP-binding positions include 283 to 287, 303 to 306, and Arg310; these read NLRAR and YATY. Residues 285-303 lie on the Extracellular side of the membrane; that stretch reads RARLDFQTPAMCAFNDRVY. A helical membrane pass occupies residues 304–325; the sequence is ATYQVTRGLASLNSCVDPILYF. The Cytoplasmic portion of the chain corresponds to 326–373; it reads LAGDTFRRRLSRATRKASRRSEANLQSKSEDMTLNILPEFKQNGDTSL.

Belongs to the G-protein coupled receptor 1 family.

It is found in the cell membrane. Its activity is regulated as follows. ATP functions as antagonist and inhibits ADP-induced mobilization of Ca(2+). The P2Y1 receptor-specific antagonists A3P5PS, A3P5P and A2P5P inhibit downstream signaling mediated by mobilization of Ca(2+) from intracellular stores, and platelet shape changes in response to extracellular ADP. Its function is as follows. Receptor for extracellular adenine nucleotides such as ADP. In platelets, binding to ADP leads to mobilization of intracellular calcium ions via activation of phospholipase C, a change in platelet shape, and ultimately platelet aggregation. This is P2Y purinoceptor 1 (P2RY1) from Homo sapiens (Human).